The chain runs to 416 residues: MIFDKEDYKAFDPELWNAIDAEAERQQNNIELIASENVVSKAVMAAQGTLLTNKYAEGYPGKRYYGGTAVIDVVETLAIERAKKLFGAKFANVQPHSGSQANAAVYMSLIQPGDTVMGMDLSAGGHLTHGAPVSFSGKTYNFVSYNVDKESELLDYDAILAQAKEVRPKLIVAGASAYSRIIDFAKFREIADAVGAYLMVDMAHIAGLVASGHHPSPVPYAHVTTTTTHKTLRGPRGGLILTDDEDIAKKLNSAVFPGLQGGPLEHVIAAKAVALKEALDPAFKEYGENVIKNAAAMADVFNQHPDFRVISGGTNNHLFLVDVTKVVENGKVAQNVLEEVNITLNKNSIPYEQLSPFKTSGIRVGSPAITSRGMGEAESRQIAEWMVEALENHDKPEVLERIRGDVKVLTDAFPLY.

Residues Leu-121 and Gly-125–Leu-127 contribute to the (6S)-5,6,7,8-tetrahydrofolate site. An N6-(pyridoxal phosphate)lysine modification is found at Lys-230. Position 355–357 (Ser-355–Phe-357) interacts with (6S)-5,6,7,8-tetrahydrofolate.

The protein belongs to the SHMT family. In terms of assembly, homodimer. The cofactor is pyridoxal 5'-phosphate.

Its subcellular location is the cytoplasm. The catalysed reaction is (6R)-5,10-methylene-5,6,7,8-tetrahydrofolate + glycine + H2O = (6S)-5,6,7,8-tetrahydrofolate + L-serine. It functions in the pathway one-carbon metabolism; tetrahydrofolate interconversion. It participates in amino-acid biosynthesis; glycine biosynthesis; glycine from L-serine: step 1/1. In terms of biological role, catalyzes the reversible interconversion of serine and glycine with tetrahydrofolate (THF) serving as the one-carbon carrier. This reaction serves as the major source of one-carbon groups required for the biosynthesis of purines, thymidylate, methionine, and other important biomolecules. Also exhibits THF-independent aldolase activity toward beta-hydroxyamino acids, producing glycine and aldehydes, via a retro-aldol mechanism. The sequence is that of Serine hydroxymethyltransferase from Streptococcus thermophilus (strain CNRZ 1066).